We begin with the raw amino-acid sequence, 307 residues long: ATP synthase gamma chain (307 aa).

Belongs to the ATPase gamma chain family. As to quaternary structure, F-type ATPases have 2 components, CF(1) - the catalytic core - and CF(0) - the membrane proton channel. CF(1) has five subunits: alpha(3), beta(3), gamma(1), delta(1), epsilon(1). CF(0) has three main subunits: a, b and c.

It is found in the cell membrane. Produces ATP from ADP in the presence of a proton gradient across the membrane. The gamma chain is believed to be important in regulating ATPase activity and the flow of protons through the CF(0) complex. The protein is ATP synthase gamma chain of Mycolicibacterium smegmatis (strain ATCC 700084 / mc(2)155) (Mycobacterium smegmatis).